An 810-amino-acid chain; its full sequence is Coiled-coil domain-containing protein 15 (810 aa).

Coiled coils occupy residues 65–89, 160–189, and 638–669; these read VVEEEIKEQQRRKQESLRHFQRQVR, DGENQLFQQQAQALSQTMKQARHQLASFKT, and MDIEREQVKEQNRQRERKRRIEKIKKKKEQQR.

Interacts with POC5, POC1B, CETN2 and FAM161A.

It is found in the cytoplasm. Its subcellular location is the cytoskeleton. It localises to the microtubule organizing center. The protein localises to the centrosome. The protein resides in the centriole. It is found in the centriolar satellite. Its function is as follows. Plays an important role in primary cilium assembly, maintenance, and length regulation. Interacts with centriole inner scaffold proteins to promote proper centriole size and integrity and assembly of functional cilia. Required for the recruitment of both the inner scaffold protein POC1B and the distal SFI1/CETN2 complex to centrioles. The protein is Coiled-coil domain-containing protein 15 (Ccdc15) of Mus musculus (Mouse).